The sequence spans 345 residues: MNYQRSFEDLEFNAIKWWPQELSATVAEASVLPILISSQDLFISILKLSGTHPEQIFDVINAAQISANLFLKHLVVLADYGGEMIKRLGKEFQEIFPRMDSTLEYYMNYTFKGEQYTYIFKKLPIKGLDNSKLAIDGKAIIEIKPLSDLYRDMIMILLYGSTTEQFNLAGLEKCEIGTILGKNEIIYTYITQKYLYVSRITNGANTNSLGQIAQTYVCDILSKYLPNDYSVTRNGKILLSDLNSQDSTKTSFDILVEFADKKVGIEVSFQVTTNSTIERKAGQARDRQNRMHAHYYWIAYVIDGAGNFERSGAVRAICRYSDCTVAYSESEIAVLAAFIQEKFNA.

The enzyme catalyses Endonucleolytic cleavage of DNA to give specific double-stranded fragments with terminal 5'-phosphates.. A P subtype restriction enzyme that recognizes the double-stranded sequence 5'-GGYRCC-3' and cleaves after G-1. The protein is Type II restriction enzyme HgiCI (hgiCIR) of Herpetosiphon aurantiacus (Herpetosiphon giganteus).